The chain runs to 83 residues: Small ribosomal subunit protein uS17 (83 aa).

The protein belongs to the universal ribosomal protein uS17 family. Part of the 30S ribosomal subunit.

Its function is as follows. One of the primary rRNA binding proteins, it binds specifically to the 5'-end of 16S ribosomal RNA. This Acaryochloris marina (strain MBIC 11017) protein is Small ribosomal subunit protein uS17.